A 492-amino-acid chain; its full sequence is Rab5 GDP/GTP exchange factor (492 aa).

The interval 1 to 74 (MSLKSERRGI…EEEAFASSQS (74 aa)) is interaction with ubiquitinated proteins. The segment at 13–47 (DQSELLCKKGCGYYGNPAWQGFCSKCWREEYHKAR) adopts an A20-type zinc-finger fold. Zn(2+)-binding residues include cysteine 19, cysteine 23, cysteine 35, and cysteine 38. Residues 66–85 (EEAFASSQSSQGAQSLTFSK) are disordered. Residues 69-84 (FASSQSSQGAQSLTFS) are compositionally biased toward low complexity. Serine 125 and serine 133 each carry phosphoserine. An N6-acetyllysine mark is found at lysine 152 and lysine 171. Residues 233–376 (EKKDLAIQKR…IEKLDAQSLN (144 aa)) enclose the VPS9 domain. Phosphoserine occurs at positions 374, 378, 391, and 401. Positions 408–449 (VKQMYKNLDLLSQLNERQERIMNEAKKLEKDLIDWTDGIAKE) form a coiled coil. The tract at residues 471–492 (IDSENVENDKLPPPLQPQVYAG) is disordered.

As to quaternary structure, heterodimer with RABEP1. The heterodimer binds RAB4A and RAB5A that have been activated by GTP-binding. Binds TSC2, GGA1, GGA2, GGA3, AP1G1 and AP1G2. Interacts with RAB21, and with 100-fold lower affinity also with RAB22. Interacts with ubiquitinated EGFR. Interacts with RGS14; the interaction is GTP-dependent. In terms of processing, monoubiquitinated. Detected in brain.

The protein localises to the cytoplasm. The protein resides in the early endosome. Its subcellular location is the recycling endosome. Functionally, rab effector protein acting as linker between gamma-adaptin and RAB5A. Involved in endocytic membrane fusion and membrane trafficking of recycling endosomes. Stimulates nucleotide exchange on RAB5A. Can act as a ubiquitin ligase. The protein is Rab5 GDP/GTP exchange factor (RABGEF1) of Bos taurus (Bovine).